The chain runs to 231 residues: Small ribosomal subunit protein uS3 (231 aa).

One can recognise a KH type-2 domain in the interval 39 to 107 (IRELLHKELK…DVVLNIVEIR (69 aa)).

It belongs to the universal ribosomal protein uS3 family. In terms of assembly, part of the 30S ribosomal subunit. Forms a tight complex with proteins S10 and S14.

In terms of biological role, binds the lower part of the 30S subunit head. Binds mRNA in the 70S ribosome, positioning it for translation. The sequence is that of Small ribosomal subunit protein uS3 from Nitrobacter winogradskyi (strain ATCC 25391 / DSM 10237 / CIP 104748 / NCIMB 11846 / Nb-255).